We begin with the raw amino-acid sequence, 58 residues long: Small ribosomal subunit protein bS21 (58 aa).

The disordered stretch occupies residues 35–58; it reads REHYEKPSVKKKKKSEAARKRKFK. Residues 43-58 are compositionally biased toward basic residues; it reads VKKKKKSEAARKRKFK.

Belongs to the bacterial ribosomal protein bS21 family.

This Clostridium botulinum (strain Alaska E43 / Type E3) protein is Small ribosomal subunit protein bS21.